A 220-amino-acid chain; its full sequence is UPF0502 protein PSPPH_2577 (220 aa).

The protein belongs to the UPF0502 family.

The chain is UPF0502 protein PSPPH_2577 from Pseudomonas savastanoi pv. phaseolicola (strain 1448A / Race 6) (Pseudomonas syringae pv. phaseolicola (strain 1448A / Race 6)).